Consider the following 512-residue polypeptide: Reduced folate transporter (512 aa).

An N-acetylmethionine modification is found at Met-1. Topologically, residues 1–29 (MVPTGQVAEKQAYEEPRQDHELKSWRCLV) are cytoplasmic. Residues 30–50 (FYLCFFGFMAQLRPGESFITP) traverse the membrane as a helical segment. Residues Ile-48 and Thr-49 each coordinate folate. Topologically, residues 51–62 (FLLERKFTKEQV) are extracellular. Residues 63-85 (TNEIIPMLPYSHLAVLVPVFLLT) form a helical membrane-spanning segment. At 86-89 (DYLR) the chain is on the cytoplasmic side. Residues 90-110 (YKPVLVLQCLSFVCVWLLLLL) traverse the membrane as a helical segment. At 111-114 (GTSV) the chain is on the extracellular side. Residues 115–137 (VHMQLMEVFYSVTMAARIAYSSY) form a helical membrane-spanning segment. Residues Glu-121 and Arg-131 each contribute to the folate site. Residues 138 to 151 (IFSLVHPSRYQRMA) are Cytoplasmic-facing. A helical membrane pass occupies residues 152–176 (SYSRAAVLLGVFISSVLGQALVTVG). Position 162 (Val-162) interacts with folate. At 177–181 (HISTY) the chain is on the extracellular side. The chain crosses the membrane as a helical span at residues 182 to 200 (TLNCVSLGFILFSLVLSLF). Over 201 to 266 (LKRPKRSLFF…ELVENARQPQ (66 aa)) the chain is Cytoplasmic. A helical transmembrane segment spans residues 267–292 (LRLWCLWWVFNSSGYYLITYYVHVLW). Folate-binding residues include Tyr-281, Tyr-282, and Tyr-286. At 293 to 300 (RSTDSSLS) the chain is on the extracellular side. Residues 301–323 (YNGAVDAASTLLSAITSFSAGFL) traverse the membrane as a helical segment. Residues 324–329 (SIRWTL) lie on the Cytoplasmic side of the membrane. The chain crosses the membrane as a helical span at residues 330-350 (WSKLVIAGVIAIQASLVFCMF). The Extracellular segment spans residues 351 to 353 (QIR). Residues 354 to 377 (DIWVCYVTFVLFRGAYQFLVPIAT) form a helical membrane-spanning segment. 2 residues coordinate folate: Arg-366 and Gln-370. Residues 378 to 391 (FQIASSLSKELCAL) are Cytoplasmic-facing. The helical transmembrane segment at 392-415 (VFGINTFLATALKTCITLVVSDKR) threads the bilayer. Positions 400-412 (ATALKTCITLVVS) are required for substrate-binding. Topologically, residues 416-423 (GLGLQVRD) are extracellular. The helical transmembrane segment at 424-448 (QFRIYFIYFLMLSITCFAWAGLDGL) threads the bilayer. Topologically, residues 449-512 (RYCQRGRHQP…RGDLRVEAKA (64 aa)) are cytoplasmic. Phosphoserine occurs at positions 467, 472, and 477. The segment at 478-512 (LQDGDLRGPQPSAPQLLSEDGMEDDRGDLRVEAKA) is disordered.

This sequence belongs to the reduced folate carrier (RFC) transporter (TC 2.A.48) family.

It localises to the cell membrane. The protein localises to the apical cell membrane. The protein resides in the basolateral cell membrane. It catalyses the reaction 5-amino-1-(5-phospho-beta-D-ribosyl)imidazole-4-carboxamide(in) + (6S)-5-methyl-5,6,7,8-tetrahydrofolate(out) = 5-amino-1-(5-phospho-beta-D-ribosyl)imidazole-4-carboxamide(out) + (6S)-5-methyl-5,6,7,8-tetrahydrofolate(in). Antiporter that mediates the import of reduced folates, driven by the export of organic anions. Also acts as an importer of immunoreactive cyclic dinucleotides, but with a lower transporter activity. Mechanistically, acts as a secondary active transporter, which exports intracellular organic anions down their concentration gradients to facilitate the uptake of its substrates. Has high affinity for N5-methyltetrahydrofolate, the predominant circulating form of folate. Also mediates the import of antifolate drug methotrexate. 5-amino-4-imidazolecarboxamide riboside (AICAR), when phosphorylated to AICAR monophosphate, can serve as an organic anion for antiporter activity. The polypeptide is Reduced folate transporter (Mus musculus (Mouse)).